Here is a 68-residue protein sequence, read N- to C-terminus: Riparin-1.5 amide (68 aa).

A signal peptide spans 1-15 (MKIIVVLAVLMLVSA). A propeptide spanning residues 16–41 (QVCLVSAAEMGHSSDNELSSRDLVKR) is cleaved from the precursor. Cysteines 47 and 53 form a disulfide. Cysteine 53 bears the Cysteine amide mark. A propeptide spanning residues 57–68 (SIESSEGANGGE) is cleaved from the precursor.

As to expression, expressed by the skin glands.

The protein localises to the secreted. This is Riparin-1.5 amide from Crinia riparia (Streambank froglet).